Here is an 852-residue protein sequence, read N- to C-terminus: DNA mismatch repair protein MutS (852 aa).

An ATP-binding site is contributed by 602–609; it reads GPNMSGKS.

Belongs to the DNA mismatch repair MutS family.

Its function is as follows. This protein is involved in the repair of mismatches in DNA. It is possible that it carries out the mismatch recognition step. This protein has a weak ATPase activity. The chain is DNA mismatch repair protein MutS from Streptococcus thermophilus (strain ATCC BAA-250 / LMG 18311).